Here is a 598-residue protein sequence, read N- to C-terminus: Nuclear receptor subfamily 4 group A member 2 (598 aa).

The tract at residues 1–22 (MPCVQAQYGSSPQGASPASQGY) is disordered. Residues 7–18 (QYGSSPQGASPA) are compositionally biased toward polar residues. Positions 260 to 335 (EGLCAVCGDN…VGMVKEVVRT (76 aa)) form a DNA-binding region, nuclear receptor. NR C4-type zinc fingers lie at residues 263–283 (CAVC…CEGC) and 299–318 (CLAN…CQYC). The Bipartite nuclear localization signal (NLS1) motif lies at 287 to 314 (FKRTVQKNAKYVCLANKNCPVDKRRRNR). The tract at residues 337–361 (SLKGRRGRLPSKPKSPQEPSPPSPP) is disordered. The short motif at 338 to 350 (LKGRRGRLPSKPK) is the Nuclear localization signal (NLS1) element. Positions 352–361 (PQEPSPPSPP) are enriched in pro residues. The NR LBD domain maps to 360 to 595 (PPVSLISALV…AIIDKLFLDT (236 aa)). A nuclear export sequence (NES1) motif is present at residues 443–452 (FLELFVLRLA). A nuclear export sequence (NES2) motif is present at residues 568 to 577 (QGLQRIFYLK).

The protein belongs to the nuclear hormone receptor family. In terms of assembly, interacts with SFPQ, NCOR2, SIN3A and HADC1. The interaction with NCOR2 increases in the absence of PITX3. Interacts with PER2.

It is found in the cytoplasm. It localises to the nucleus. Functionally, transcriptional regulator which is important for the differentiation and maintenance of meso-diencephalic dopaminergic (mdDA) neurons during development. It is crucial for expression of a set of genes such as SLC6A3, SLC18A2, TH and DRD2 which are essential for development of mdDA neurons. This chain is Nuclear receptor subfamily 4 group A member 2 (NR4A2), found in Pongo abelii (Sumatran orangutan).